The primary structure comprises 634 residues: MRPATELAVRIGRELLKVSGSSRAARIWSPLIEQSLHGLGFRHSISPSLVARVIDPFLLNHHSLALGFFNWAAQQPGYSHDSISYHSIFKSLSLSRQFSAMDALFKQVKSNKILLDSSVYRSLIDTLVLGRKAQSAFWVLEEAFSTGQEIHPDVCNRLLAGLTSDGCYDYAQKLFVKMRHKGVSLNTLGFGVYIGWFCRSSETNQLLRLVDEVKKANLNINGSIIALLILHSLCKCSREMDAFYILEELRNIDCKPDFMAYRVIAEAFVVTGNLYERQVVLKKKRKLGVAPRSSDYRAFILDLISAKRLTEAKEVAEVIVSGKFPMDNDILDALIGSVSAVDPDSAVEFLVYMVSTGKLPAIRTLSKLSKNLCRHDKSDHLIKAYELLSSKGYFSELQSYSLMISFLCKAGRVRESYTALQEMKKEGLAPDVSLYNALIEACCKAEMIRPAKKLWDEMFVEGCKMNLTTYNVLIRKLSEEGEAEESLRLFDKMLERGIEPDETIYMSLIEGLCKETKIEAAMEVFRKCMERDHKTVTRRVLSEFVLNLCSNGHSGEASQLLREREHLEHTGAHVVLLKCVADAKEVEIGIRHMQWIKEVSPSLVHTISSDLLASFCSSSDPDSILPFIRAIENT.

PPR repeat units follow at residues D81–L115, D116–I150, H151–L185, N186–I220, G222–P256, D257–P291, R292–M326, D327–P360, A361–S395, E396–P430, D431–M465, N466–P500, and D501–T535.

It belongs to the PPR family. P subfamily.

The sequence is that of Pentatricopeptide repeat-containing protein At5g14080 from Arabidopsis thaliana (Mouse-ear cress).